The sequence spans 271 residues: Dermonecrotic toxin LhSicTox-alphaIA2bv (271 aa).

His3 is a catalytic residue. 2 residues coordinate Mg(2+): Glu23 and Asp25. 2 disulfides stabilise this stretch: Cys43-Cys49 and Cys45-Cys188. Position 83 (Asp83) interacts with Mg(2+).

It belongs to the arthropod phospholipase D family. Class II subfamily. The cofactor is Mg(2+). As to expression, expressed by the venom gland.

The protein resides in the secreted. The enzyme catalyses an N-(acyl)-sphingosylphosphocholine = an N-(acyl)-sphingosyl-1,3-cyclic phosphate + choline. It catalyses the reaction an N-(acyl)-sphingosylphosphoethanolamine = an N-(acyl)-sphingosyl-1,3-cyclic phosphate + ethanolamine. It carries out the reaction a 1-acyl-sn-glycero-3-phosphocholine = a 1-acyl-sn-glycero-2,3-cyclic phosphate + choline. The catalysed reaction is a 1-acyl-sn-glycero-3-phosphoethanolamine = a 1-acyl-sn-glycero-2,3-cyclic phosphate + ethanolamine. Its function is as follows. Dermonecrotic toxins cleave the phosphodiester linkage between the phosphate and headgroup of certain phospholipids (sphingolipid and lysolipid substrates), forming an alcohol (often choline) and a cyclic phosphate. This toxin acts on sphingomyelin (SM). It may also act on ceramide phosphoethanolamine (CPE), lysophosphatidylcholine (LPC) and lysophosphatidylethanolamine (LPE), but not on lysophosphatidylserine (LPS), and lysophosphatidylglycerol (LPG). It acts by transphosphatidylation, releasing exclusively cyclic phosphate products as second products. Induces dermonecrosis, hemolysis, increased vascular permeability, edema, inflammatory response, and platelet aggregation. The polypeptide is Dermonecrotic toxin LhSicTox-alphaIA2bv (Loxosceles hirsuta (Recluse spider)).